The sequence spans 298 residues: Syntaxin-4 (298 aa).

Over 1 to 274 the chain is Cytoplasmic; it reads MRDRTHELRQ…NQKKARKKKV (274 aa). Residues Ser15, Ser29, Ser36, Ser117, Ser208, and Ser248 each carry the phosphoserine modification. The stretch at 38 to 163 forms a coiled coil; the sequence is DDEFFQKVQT…ERIRRQLKIT (126 aa). The tract at residues 154-298 is interaction with CENPF; it reads ERIRRQLKIT…VIIGITITVG (145 aa). Residues 200 to 262 form the t-SNARE coiled-coil homology domain; the sequence is LNEISARHSE…ERGQEHVKIA (63 aa). Residues 275–295 traverse the membrane as a helical; Anchor for type IV membrane protein segment; sequence MIAICVSVTVLILAVIIGITI. At 296–298 the chain is on the extracellular side; sequence TVG.

The protein belongs to the syntaxin family. As to quaternary structure, interacts with STXBP6. Component of the SNARE complex composed of STX4, SNAP23 and VAMP7 that interacts with SYT7 during lysosomal exocytosis. Found in a complex with VAMP8 and SNAP23. Detected in a complex with SNAP23 and STXBP4. Interacts with VAMP2. Interacts with SNAP23 and SNAPIN. Interacts with LLGL1. Interacts (via C-terminus) with CENPF. Interacts with DOC2B. Interacts with STXBP3; excludes interaction with DOC2B and SNAP25. Interacts with STXBP4; excludes interaction with VAMP2. Interacts with STXBP5L. As to expression, expressed in the outer and inner hair cells of the cochlea.

It is found in the cell membrane. The protein localises to the cell projection. The protein resides in the neuron projection. Its subcellular location is the stereocilium. In terms of biological role, plasma membrane t-SNARE that mediates docking of transport vesicles. Necessary for the translocation of SLC2A4 from intracellular vesicles to the plasma membrane. In neurons, recruited at neurite tips to membrane domains rich in the phospholipid 1-oleoyl-2-palmitoyl-PC (OPPC) which promotes neurite tip surface expression of the dopamine transporter SLC6A3/DAT by facilitating fusion of SLC6A3-containing transport vesicles with the plasma membrane. Together with STXB3 and VAMP2, may also play a role in docking/fusion of intracellular GLUT4-containing vesicles with the cell surface in adipocytes and in docking of synaptic vesicles at presynaptic active zones. Required for normal hearing. In Mus musculus (Mouse), this protein is Syntaxin-4 (Stx4).